A 725-amino-acid chain; its full sequence is Dolichyl-phosphate-mannose--protein mannosyltransferase 5 (725 aa).

Transmembrane regions (helical) follow at residues 34–54 (QFAVFSILLISLIRLYKLYIP), 117–137 (YLWLRLFSGICGIGHVLLTFF), 145–165 (SVISIVITILICLENSMVTVS), 192–212 (IPFTGCWYFNLFVTGIALGLN), 219–239 (GLFTFAWVGILTCVQLWEILG), and 256–276 (VVAFIMVPLTIYCSVFYIHFE). MIR domains are found at residues 303 to 356 (PLQV…IETK), 368 to 427 (QREV…IRML), and 439 to 495 (LIKL…VESS). N-linked (GlcNAc...) asparagine glycosylation is present at Asn-409. 4 helical membrane passes run 570–590 (IYYLGNVAIYYSVFFVGLIAI), 619–639 (FYNNSWPYLVGWFINYIPYCL), 644–664 (LYLHHYLSALNFGILLLSQYL), and 673–693 (IIGGIITATIFVSAIYCFYEF).

The protein belongs to the glycosyltransferase 39 family.

The protein resides in the endoplasmic reticulum membrane. The enzyme catalyses a di-trans,poly-cis-dolichyl beta-D-mannosyl phosphate + L-seryl-[protein] = 3-O-(alpha-D-mannosyl)-L-seryl-[protein] + a di-trans,poly-cis-dolichyl phosphate + H(+). The catalysed reaction is a di-trans,poly-cis-dolichyl beta-D-mannosyl phosphate + L-threonyl-[protein] = 3-O-(alpha-D-mannosyl)-L-threonyl-[protein] + a di-trans,poly-cis-dolichyl phosphate + H(+). Its pathway is protein modification; protein glycosylation. In terms of biological role, protein mannosyltransferase (PMT) involved in hyphal morphogenesis and drug sensitivity. Transfers mannose from Dol-P-mannose to Ser or Thr residues on proteins. PMT1, PMT2 and PMT4 account for most of the protein-O-glycosylation activity, while PMT5 and PMT6 may specifically modulate a much narrower spectrum of target proteins. Required for biofilm formation. The chain is Dolichyl-phosphate-mannose--protein mannosyltransferase 5 from Candida albicans (strain SC5314 / ATCC MYA-2876) (Yeast).